Here is a 375-residue protein sequence, read N- to C-terminus: Queuine tRNA-ribosyltransferase (375 aa).

Asp-90 (proton acceptor) is an active-site residue. Substrate contacts are provided by residues 90–94, Asp-144, Gln-190, and Gly-217; that span reads DSGGF. Residues 248-254 form an RNA binding region; it reads GIGTPHY. Asp-267 (nucleophile) is an active-site residue. The RNA binding; important for wobble base 34 recognition stretch occupies residues 272 to 276; that stretch reads TRIAR. 4 residues coordinate Zn(2+): Cys-305, Cys-307, Cys-310, and His-336.

Belongs to the queuine tRNA-ribosyltransferase family. As to quaternary structure, homodimer. Within each dimer, one monomer is responsible for RNA recognition and catalysis, while the other monomer binds to the replacement base PreQ1. Requires Zn(2+) as cofactor.

It carries out the reaction 7-aminomethyl-7-carbaguanine + guanosine(34) in tRNA = 7-aminomethyl-7-carbaguanosine(34) in tRNA + guanine. It functions in the pathway tRNA modification; tRNA-queuosine biosynthesis. Functionally, catalyzes the base-exchange of a guanine (G) residue with the queuine precursor 7-aminomethyl-7-deazaguanine (PreQ1) at position 34 (anticodon wobble position) in tRNAs with GU(N) anticodons (tRNA-Asp, -Asn, -His and -Tyr). Catalysis occurs through a double-displacement mechanism. The nucleophile active site attacks the C1' of nucleotide 34 to detach the guanine base from the RNA, forming a covalent enzyme-RNA intermediate. The proton acceptor active site deprotonates the incoming PreQ1, allowing a nucleophilic attack on the C1' of the ribose to form the product. After dissociation, two additional enzymatic reactions on the tRNA convert PreQ1 to queuine (Q), resulting in the hypermodified nucleoside queuosine (7-(((4,5-cis-dihydroxy-2-cyclopenten-1-yl)amino)methyl)-7-deazaguanosine). This is Queuine tRNA-ribosyltransferase from Borrelia recurrentis (strain A1).